Consider the following 380-residue polypeptide: Anhydro-N-acetylmuramic acid kinase (380 aa).

9–16 lines the ATP pocket; the sequence is GTSVDGID.

This sequence belongs to the anhydro-N-acetylmuramic acid kinase family.

It catalyses the reaction 1,6-anhydro-N-acetyl-beta-muramate + ATP + H2O = N-acetyl-D-muramate 6-phosphate + ADP + H(+). The protein operates within amino-sugar metabolism; 1,6-anhydro-N-acetylmuramate degradation. It functions in the pathway cell wall biogenesis; peptidoglycan recycling. In terms of biological role, catalyzes the specific phosphorylation of 1,6-anhydro-N-acetylmuramic acid (anhMurNAc) with the simultaneous cleavage of the 1,6-anhydro ring, generating MurNAc-6-P. Is required for the utilization of anhMurNAc either imported from the medium or derived from its own cell wall murein, and thus plays a role in cell wall recycling. The sequence is that of Anhydro-N-acetylmuramic acid kinase from Cyanothece sp. (strain PCC 7425 / ATCC 29141).